Here is a 1927-residue protein sequence, read N- to C-terminus: Integrin beta-like protein A (1927 aa).

The N-terminal stretch at M1 to A20 is a signal peptide. Residues T21–T1860 lie on the Extracellular side of the membrane. A glycan (N-linked (GlcNAc...) asparagine) is linked at N309. In terms of domain architecture, EGF-like spans Y425 to D462. Disulfide bonds link C435-C450 and C452-C461. A VWFA domain is found at E522–I709. N-linked (GlcNAc...) asparagine glycans are attached at residues N1122, N1516, N1717, N1723, and N1855. The chain crosses the membrane as a helical span at residues G1861–L1881. At K1882–L1927 the chain is on the cytoplasmic side.

It belongs to the SIB family. In terms of assembly, interacts with talA/talin.

The protein resides in the membrane. Functionally, implicated in cellular adhesion to substrate or phagocytic particles. This is Integrin beta-like protein A (sibA) from Dictyostelium discoideum (Social amoeba).